The chain runs to 658 residues: Cysteine-rich receptor-like protein kinase 14 (658 aa).

Positions 1 to 22 (MELKNLFPIFWFVLVGFAVVSA) are cleaved as a signal peptide. Gnk2-homologous domains are found at residues 23-125 (QECG…NSSF) and 131-240 (AEPH…LFPF). At 23-277 (QECGKTGFFV…ATKKGSITIS (255 aa)) the chain is on the extracellular side. 5 N-linked (GlcNAc...) asparagine glycosylation sites follow: Asn-51, Asn-60, Asn-102, Asn-122, and Asn-146. A helical transmembrane segment spans residues 278 to 298 (IGIVWAIIIPTVIVVFLVLLA). The Cytoplasmic segment spans residues 299 to 658 (LGFVVYRRRK…DVTITDFEPR (360 aa)). A Protein kinase domain is found at 337-614 (FSESNIIGRG…NMMLINNSYV (278 aa)). ATP contacts are provided by residues 343 to 351 (IGRGGFGEV) and Lys-364. Tyr-409 is modified (phosphotyrosine). The active-site Proton acceptor is the Asp-461. At Ser-465 the chain carries Phosphoserine. Residue Thr-501 is modified to Phosphothreonine. Tyr-509 is modified (phosphotyrosine).

Belongs to the protein kinase superfamily. Ser/Thr protein kinase family. CRK subfamily.

The protein localises to the membrane. The enzyme catalyses L-seryl-[protein] + ATP = O-phospho-L-seryl-[protein] + ADP + H(+). It carries out the reaction L-threonyl-[protein] + ATP = O-phospho-L-threonyl-[protein] + ADP + H(+). This is Cysteine-rich receptor-like protein kinase 14 (CRK14) from Arabidopsis thaliana (Mouse-ear cress).